We begin with the raw amino-acid sequence, 217 residues long: Peptide deformylase (217 aa).

Residues Cys-91 and His-133 each coordinate Fe cation. The active site involves Glu-134. A Fe cation-binding site is contributed by His-137. The interval Val-153–Glu-217 is disordered. The segment covering Glu-155–Gly-176 has biased composition (acidic residues). Low complexity predominate over residues Ala-177 to Ala-192. Positions Gly-206–Glu-217 are enriched in basic and acidic residues.

The protein belongs to the polypeptide deformylase family. Fe(2+) is required as a cofactor.

It carries out the reaction N-terminal N-formyl-L-methionyl-[peptide] + H2O = N-terminal L-methionyl-[peptide] + formate. Functionally, removes the formyl group from the N-terminal Met of newly synthesized proteins. Requires at least a dipeptide for an efficient rate of reaction. N-terminal L-methionine is a prerequisite for activity but the enzyme has broad specificity at other positions. In Symbiobacterium thermophilum (strain DSM 24528 / JCM 14929 / IAM 14863 / T), this protein is Peptide deformylase.